Here is a 612-residue protein sequence, read N- to C-terminus: 1,8-cineole synthase, chloroplastic (612 aa).

A chloroplast-targeting transit peptide spans 1–52 (MALVCGAPLASRSCLNKSLISSTHELKPLRRTILPTLRWKSATPSINMCLTT). 3 residues coordinate Mg(2+): aspartate 363, aspartate 367, and aspartate 515. A DDXXD motif motif is present at residues 363–367 (DDIYD).

The protein belongs to the terpene synthase family. Tpsd subfamily. Mg(2+) is required as a cofactor. Requires Mn(2+) as cofactor.

The protein resides in the plastid. It localises to the chloroplast. It carries out the reaction (2E)-geranyl diphosphate + H2O = 1,8-cineole + diphosphate. It functions in the pathway terpene metabolism; oleoresin biosynthesis. Terpene synthase (TPS) involved in the biosynthesis of monoterpene natural products included in conifer oleoresin secretions and volatile emissions; these compounds contribute to biotic and abiotic stress defense against herbivores and pathogens. Catalyzes the conversion of (2E)-geranyl diphosphate (GPP) to 1,8-cineole. The sequence is that of 1,8-cineole synthase, chloroplastic from Picea glauca (White spruce).